The following is a 217-amino-acid chain: MEEEEHEVYGGEIPEVGDTDVPDPDIDMSAADEDAVTELAEMKRRLKEMEEEAAALREMQAKVEKEMGATQDPASMAANQEGKEEVDARSVYVGNVDYACTPEEVQLHFQTCGTVNRVTILMDKFGQPKGFAYVEFVEVEAVQEALQLNESELHGRQLKVSPKRTNVPGMKQYHPGRFNPSMGYRFRRPFVPPYFYSPYGYGKAPRFRRPMRYMPYQ.

Residues 1 to 28 (MEEEEHEVYGGEIPEVGDTDVPDPDIDM) are disordered. Over residues 15 to 28 (EVGDTDVPDPDIDM) the composition is skewed to acidic residues. Residues 30–71 (AADEDAVTELAEMKRRLKEMEEEAAALREMQAKVEKEMGATQ) adopt a coiled-coil conformation. The segment at 75–216 (SMAANQEGKE…FRRPMRYMPY (142 aa)) is necessary for homooligomerization. The RRM domain occupies 89–165 (RSVYVGNVDY…RQLKVSPKRT (77 aa)). A Nuclear localization signal motif is present at residues 162–169 (PKRTNVPG).

Monomer and homooligomer. Binds RNA as a monomer and oligomerizes when bound to poly(A). Forms a complex with cleavage and polyadenylation specificity factor (CPSF) subunits PAPS4, PABN1, PABN2, CSTF50 and FIPS5. Interacts with CSP3.

Its subcellular location is the nucleus speckle. The protein localises to the cytoplasm. Involved in the 3'-end formation of mRNA precursors (pre-mRNA) by the addition of a poly(A) tail of 200-250 nt to the upstream cleavage product. Stimulates poly(A) polymerase (PAPOLA) conferring processivity on the poly(A) tail elongation reaction and also controls the poly(A) tail length. Increases the affinity of poly(A) polymerase for RNA. Binds to poly(A) and to poly(G) with high affinity. May protect the poly(A) tail from degradation. The polypeptide is Polyadenylate-binding protein 3 (Arabidopsis thaliana (Mouse-ear cress)).